A 339-amino-acid chain; its full sequence is Ribosomal RNA small subunit methyltransferase H (339 aa).

S-adenosyl-L-methionine is bound by residues 36–38, D55, F82, D103, and Q110; that span reads GGY. Positions 286 to 319 are disordered; sequence GPIGPSEAEATANPRARSAKLRAGERTDAPIPEP.

It belongs to the methyltransferase superfamily. RsmH family.

The protein resides in the cytoplasm. It catalyses the reaction cytidine(1402) in 16S rRNA + S-adenosyl-L-methionine = N(4)-methylcytidine(1402) in 16S rRNA + S-adenosyl-L-homocysteine + H(+). Its function is as follows. Specifically methylates the N4 position of cytidine in position 1402 (C1402) of 16S rRNA. This chain is Ribosomal RNA small subunit methyltransferase H, found in Methylobacterium nodulans (strain LMG 21967 / CNCM I-2342 / ORS 2060).